A 692-amino-acid chain; its full sequence is MDQGYGGYGAWSAGPANTQGAYGTGVASWQGYENYNYYGAQNTSVTTGATYSYGPASWEAAKANDGGLAAGAPAMHMASYGPEPCTDNSDSLIAKINQRLDMMSKEGGRGGSGGGGEGIQDRESSFRFQPFESYDSRPCLPEHNPYRPSYSYDYEFDLGSDRNGSFGGQYSECRDPARERGSLDGFMRGRGQGRFQDRSNPGTFMRSDPFVPPAASSEPLSTPWNELNYVGGRGLGGPSPSRPPPSLFSQSMAPDYGVMGMQGAGGYDSTMPYGCGRSQPRMRDRDRPKRRGFDRFGPDGTGRKRKQFQLYEEPDTKLARVDSEGDFSENDDAAGDFRSGDEEFKGEDELCDSGRQRGEKEDEDEDVKKRREKQRRRDRTRDRAADRIQFACSVCKFRSFDDEEIQKHLQSKFHKETLRFISTKLPDKTVEFLQEYIVNRNKKIEKRRQELMEKETAKPKPDPFKGIGQEHFFKKIEAAHCLACDMLIPAQPQLLQRHLHSVDHNHNRRLAAEQFKKTSLHVAKSVLNNRHIVKMLEKYLKGEDPFTSETVDPEMEGDDNLGGEDKKETPEEVAADVLAEVITAAVRAVDGEGAPAPESSGEPAEDEGPTDTAEAGSDPQAEQLLEEQVPCGTAHEKGVPKARSEAAEAGNGAETMAAEAESAQTRVAPAPAAADAEVEQTDAESKDAVPTE.

The segment at methionine 1–phenylalanine 195 is interaction with MCM2. Residues methionine 1–phenylalanine 210 form an interaction with DPY30 region. Asymmetric dimethylarginine; alternate is present on arginine 109. Residue arginine 109 is modified to Omega-N-methylarginine; alternate. The tract at residues arginine 109 to proline 201 is interaction with DDX5. Serine 112 is modified (phosphoserine). 3 disordered regions span residues glycine 168–threonine 203, glycine 231–proline 254, and serine 269–aspartate 382. Basic and acidic residues predominate over residues glutamate 172 to serine 182. A Phosphoserine modification is found at serine 199. Residues arginine 233 and arginine 277 each carry the omega-N-methylarginine modification. 2 stretches are compositionally biased toward basic and acidic residues: residues arginine 281–glycine 297 and proline 314–serine 323. A Bipartite nuclear localization signal motif is present at residues lysine 289–lysine 306. Lysine 317 participates in a covalent cross-link: Glycyl lysine isopeptide (Lys-Gly) (interchain with G-Cter in SUMO2). Serine 323, serine 328, and serine 339 each carry phosphoserine. Residues glutamate 324 to alanine 334 are compositionally biased toward acidic residues. Residues arginine 387 to glutamate 450 form an involved in chromatin-binding region. 2 consecutive C2H2 AKAP95-type zinc fingers follow at residues cysteine 392 to histidine 414 and cysteine 481 to histidine 504. The involved in condensin complex recruitment stretch occupies residues serine 525–threonine 569. The tract at residues proline 545 to glutamate 571 is disordered. The span at valine 551–glycine 562 shows a compositional bias: acidic residues. Lysine 567 is covalently cross-linked (Glycyl lysine isopeptide (Lys-Gly) (interchain with G-Cter in SUMO2)). An RII-binding region spans residues glutamate 572 to valine 589. A required for interaction with MYCBP region spans residues aspartate 576–glycine 593. Positions glutamate 592–glutamate 692 are disordered. Over residues alanine 634–alanine 646 the composition is skewed to basic and acidic residues. Position 662 is a phosphoserine (serine 662). Low complexity predominate over residues alanine 663–aspartate 675. Residues alanine 683–glutamate 692 show a composition bias toward basic and acidic residues. The residue at position 685 (serine 685) is a Phosphoserine.

The protein belongs to the AKAP95 family. Binds to the PKA RII-alpha regulatory subunit PRKAR2A (phosphorylated at 'Thr-54') during mitosis. Interacts (via C-terminus) with FIGN. Interacts with NCAPD2, CCND1, MCM2, RPS6KA1, PDE4A. Interacts with CCND3, CCNE1, DDX5, CASP3. Interacts with NFKB1; detetcted in the cytoplasm. Interacts with MYCBP; MYCBP is translocated to the nucleus and the interaction prevents the association of the PKA catalytic subunit leading to suppression of PKA activity. Interacts with DPY30; mediating AKAP8 association with at least the MLL4/WBP7 HMT complex. Interacts with HDAC3; increased during mitosis. Interacts with GJA1; in the nucleus and in the nuclear membrane; the nuclear association increases with progress of cell cycle G1, S and G2 phase and decreases in M phase. Post-translationally, phosphorylated on tyrosine residues probably by SRC subfamily protein kinases; multiple phosphorylation is leading to dissociation from nuclear structures implicated in chromatin structural changes. Highly expressed in heart, liver, skeletal muscle, kidney and pancreas. Expressed in mature dendritic cells.

The protein resides in the nucleus. The protein localises to the nucleus matrix. It localises to the nucleolus. Its subcellular location is the cytoplasm. In terms of biological role, anchoring protein that mediates the subcellular compartmentation of cAMP-dependent protein kinase (PKA type II). Acts as an anchor for a PKA-signaling complex onto mitotic chromosomes, which is required for maintenance of chromosomes in a condensed form throughout mitosis. Recruits condensin complex subunit NCAPD2 to chromosomes required for chromatin condensation; the function appears to be independent from PKA-anchoring. May help to deliver cyclin D/E to CDK4 to facilitate cell cycle progression. Required for cell cycle G2/M transition and histone deacetylation during mitosis. In mitotic cells recruits HDAC3 to the vicinity of chromatin leading to deacetylation and subsequent phosphorylation at 'Ser-10' of histone H3; in this function may act redundantly with AKAP8L. Involved in nuclear retention of RPS6KA1 upon ERK activation thus inducing cell proliferation. May be involved in regulation of DNA replication by acting as scaffold for MCM2. Enhances HMT activity of the KMT2 family MLL4/WBP7 complex and is involved in transcriptional regulation. In a teratocarcinoma cell line is involved in retinoic acid-mediated induction of developmental genes implicating H3 'Lys-4' methylation. May be involved in recruitment of active CASP3 to the nucleus in apoptotic cells. May act as a carrier protein of GJA1 for its transport to the nucleus. May play a repressive role in the regulation of rDNA transcription. Preferentially binds GC-rich DNA in vitro. In cells, associates with ribosomal RNA (rRNA) chromatin, preferentially with rRNA promoter and transcribed regions. Involved in modulation of Toll-like receptor signaling. Required for the cAMP-dependent suppression of TNF-alpha in early stages of LPS-induced macrophage activation; the function probably implicates targeting of PKA to NFKB1. This chain is A-kinase anchor protein 8 (AKAP8), found in Homo sapiens (Human).